The primary structure comprises 320 residues: Small ribosomal subunit protein mS35 (320 aa).

The tract at residues 24–63 (SVASPAAPRAGPRTASRSERPMRRKALPPRTEKMDTDQDW) is disordered.

This sequence belongs to the mitochondrion-specific ribosomal protein mS35 family. Component of the mitochondrial ribosome small subunit (28S) which comprises a 12S rRNA and about 30 distinct proteins.

The protein resides in the mitochondrion. This is Small ribosomal subunit protein mS35 from Mus musculus (Mouse).